A 433-amino-acid polypeptide reads, in one-letter code: 4-hydroxy-3-methylbut-2-en-1-yl diphosphate synthase (flavodoxin) (433 aa).

Residues 1-10 are compositionally biased toward polar residues; that stretch reads MRYMQDSSMP. A disordered region spans residues 1–24; sequence MRYMQDSSMPCQDASPPDVGAAPR. Residues Cys320, Cys323, Cys366, and Glu373 each coordinate [4Fe-4S] cluster.

The protein belongs to the IspG family. It depends on [4Fe-4S] cluster as a cofactor.

The enzyme catalyses (2E)-4-hydroxy-3-methylbut-2-enyl diphosphate + oxidized [flavodoxin] + H2O + 2 H(+) = 2-C-methyl-D-erythritol 2,4-cyclic diphosphate + reduced [flavodoxin]. It participates in isoprenoid biosynthesis; isopentenyl diphosphate biosynthesis via DXP pathway; isopentenyl diphosphate from 1-deoxy-D-xylulose 5-phosphate: step 5/6. Converts 2C-methyl-D-erythritol 2,4-cyclodiphosphate (ME-2,4cPP) into 1-hydroxy-2-methyl-2-(E)-butenyl 4-diphosphate. The protein is 4-hydroxy-3-methylbut-2-en-1-yl diphosphate synthase (flavodoxin) of Bordetella bronchiseptica (strain ATCC BAA-588 / NCTC 13252 / RB50) (Alcaligenes bronchisepticus).